A 359-amino-acid chain; its full sequence is Chorismate synthase (359 aa).

Arg-47 contributes to the NADP(+) binding site. FMN-binding positions include 123–125, Gly-283, 298–302, and Arg-326; these read RSS and KPTSS.

This sequence belongs to the chorismate synthase family. In terms of assembly, homotetramer. It depends on FMNH2 as a cofactor.

The enzyme catalyses 5-O-(1-carboxyvinyl)-3-phosphoshikimate = chorismate + phosphate. Its pathway is metabolic intermediate biosynthesis; chorismate biosynthesis; chorismate from D-erythrose 4-phosphate and phosphoenolpyruvate: step 7/7. Functionally, catalyzes the anti-1,4-elimination of the C-3 phosphate and the C-6 proR hydrogen from 5-enolpyruvylshikimate-3-phosphate (EPSP) to yield chorismate, which is the branch point compound that serves as the starting substrate for the three terminal pathways of aromatic amino acid biosynthesis. This reaction introduces a second double bond into the aromatic ring system. The polypeptide is Chorismate synthase (Chlamydia felis (strain Fe/C-56) (Chlamydophila felis)).